Reading from the N-terminus, the 314-residue chain is Methionyl-tRNA formyltransferase (314 aa).

110–113 contributes to the (6S)-5,6,7,8-tetrahydrofolate binding site; it reads SLLP.

This sequence belongs to the Fmt family.

It catalyses the reaction L-methionyl-tRNA(fMet) + (6R)-10-formyltetrahydrofolate = N-formyl-L-methionyl-tRNA(fMet) + (6S)-5,6,7,8-tetrahydrofolate + H(+). Its function is as follows. Attaches a formyl group to the free amino group of methionyl-tRNA(fMet). The formyl group appears to play a dual role in the initiator identity of N-formylmethionyl-tRNA by promoting its recognition by IF2 and preventing the misappropriation of this tRNA by the elongation apparatus. This chain is Methionyl-tRNA formyltransferase, found in Lactobacillus acidophilus (strain ATCC 700396 / NCK56 / N2 / NCFM).